Here is a 149-residue protein sequence, read N- to C-terminus: Golgi apparatus membrane protein tvp-18 (149 aa).

N11 is a glycosylation site (N-linked (GlcNAc...) asparagine). The next 4 helical transmembrane spans lie at W18 to F38, I41 to V61, N84 to I103, and S108 to L128.

It belongs to the TVP18 family.

Its subcellular location is the golgi apparatus membrane. In terms of biological role, golgi membrane protein involved in vesicular trafficking. The polypeptide is Golgi apparatus membrane protein tvp-18 (tvp-18) (Neurospora crassa (strain ATCC 24698 / 74-OR23-1A / CBS 708.71 / DSM 1257 / FGSC 987)).